A 483-amino-acid chain; its full sequence is Altronate oxidoreductase (483 aa).

Position 18-29 (Ile-18–Ala-29) interacts with NAD(+).

The protein belongs to the mannitol dehydrogenase family. UxaB subfamily.

It carries out the reaction D-altronate + NAD(+) = keto-D-tagaturonate + NADH + H(+). It functions in the pathway carbohydrate metabolism; pentose and glucuronate interconversion. The sequence is that of Altronate oxidoreductase from Klebsiella pneumoniae subsp. pneumoniae (strain ATCC 700721 / MGH 78578).